We begin with the raw amino-acid sequence, 297 residues long: Retroviral cyclin (297 aa).

The Cyclin N-terminal domain occupies 21 to 113 (PVYWKELLNW…KPSLLLTETM (93 aa)). The tract at residues 21 to 113 (PVYWKELLNW…KPSLLLTETM (93 aa)) is transcription activation domain. Residues 222–270 (QINLDFAEAEQREAAERRALLEREREQQLQEARERLDDVMAVLEAEVAI) are a coiled coil.

Belongs to the cyclin family. In terms of assembly, interacts (via transcription activation domain) with host TAF9 in vitro. Interacts with host CDK3 and CDK8.

It is found in the host nucleus. Functionally, transforming protein which induces the development of dermal sarcomas. Induces positive and negative regulation of transcription from host and viral promoters by interacting with various cellular factors involved in protein transcription regulation. This is Retroviral cyclin (orfA) from Sander vitreus (Walleye).